Here is a 206-residue protein sequence, read N- to C-terminus: High-affinity nitrate transporter-activating protein 2.1 (206 aa).

The N-terminal stretch at 1–27 is a signal peptide; sequence MARLAGVAALSLVLVLLGAGVPRPAAA. A helical transmembrane segment spans residues 180-200; that stretch reads VAAGVFSTFSIAALAFFFVVE.

It belongs to the NAR2 family. As to quaternary structure, heterotetramer composed of two NRT2.1, NRT2.2 or NRT2.3 and two NAR2.1. Interacts with NRT2.1, NRT2.2 and isoform 1 of NRT2.3. Expressed in epidermal cells of primary and lateral roots, root-shoot junction zone, vascular tissues of adventitious root primordia, stems and coleoptiles of germinating seeds.

Its subcellular location is the cell membrane. Functionally, acts as a dual component transporter with NTR2.1, NRT2.2 and NRT2.3. Required for high-affinity nitrate transport. Involved in the regulation of NRT2.1, NRT2.2 and NRT2.3 expression, and in both, HATS (high-affinity transport system) and LATS (low-affinity transport system) activities in plant roots. Imports nitrate with high affinity when expressed with NTR2.1, NTR2.2 or NTR2.3 in a heterologous system (Xenopus oocytes). This chain is High-affinity nitrate transporter-activating protein 2.1 (NAR2.1), found in Oryza sativa subsp. japonica (Rice).